A 206-amino-acid chain; its full sequence is N-(5'-phosphoribosyl)anthranilate isomerase (206 aa).

It belongs to the TrpF family.

It carries out the reaction N-(5-phospho-beta-D-ribosyl)anthranilate = 1-(2-carboxyphenylamino)-1-deoxy-D-ribulose 5-phosphate. Its pathway is amino-acid biosynthesis; L-tryptophan biosynthesis; L-tryptophan from chorismate: step 3/5. In Chlamydia caviae (strain ATCC VR-813 / DSM 19441 / 03DC25 / GPIC) (Chlamydophila caviae), this protein is N-(5'-phosphoribosyl)anthranilate isomerase.